A 153-amino-acid polypeptide reads, in one-letter code: NAD(P)H-quinone oxidoreductase subunit N (153 aa).

It belongs to the complex I NdhN subunit family. NDH-1 can be composed of about 15 different subunits; different subcomplexes with different compositions have been identified which probably have different functions.

Its subcellular location is the cellular thylakoid membrane. It carries out the reaction a plastoquinone + NADH + (n+1) H(+)(in) = a plastoquinol + NAD(+) + n H(+)(out). It catalyses the reaction a plastoquinone + NADPH + (n+1) H(+)(in) = a plastoquinol + NADP(+) + n H(+)(out). NDH-1 shuttles electrons from an unknown electron donor, via FMN and iron-sulfur (Fe-S) centers, to quinones in the respiratory and/or the photosynthetic chain. The immediate electron acceptor for the enzyme in this species is believed to be plastoquinone. Couples the redox reaction to proton translocation, and thus conserves the redox energy in a proton gradient. Cyanobacterial NDH-1 also plays a role in inorganic carbon-concentration. This Synechococcus sp. (strain WH7803) protein is NAD(P)H-quinone oxidoreductase subunit N.